The sequence spans 251 residues: PF03932 family protein CutC (251 aa).

It belongs to the CutC family.

The protein localises to the cytoplasm. The chain is PF03932 family protein CutC from Bacteroides fragilis (strain YCH46).